Reading from the N-terminus, the 642-residue chain is Threonine--tRNA ligase (642 aa).

Positions 1-61 (MPVITLPDGS…ENDATLAIIT (61 aa)) constitute a TGS domain. The tract at residues 243–534 (DHRKIGKQLD…LTEEFAGFFP (292 aa)) is catalytic. Zn(2+) is bound by residues C334, H385, and H511.

This sequence belongs to the class-II aminoacyl-tRNA synthetase family. Homodimer. Zn(2+) serves as cofactor.

Its subcellular location is the cytoplasm. The enzyme catalyses tRNA(Thr) + L-threonine + ATP = L-threonyl-tRNA(Thr) + AMP + diphosphate + H(+). Functionally, catalyzes the attachment of threonine to tRNA(Thr) in a two-step reaction: L-threonine is first activated by ATP to form Thr-AMP and then transferred to the acceptor end of tRNA(Thr). Also edits incorrectly charged L-seryl-tRNA(Thr). In Salmonella dublin (strain CT_02021853), this protein is Threonine--tRNA ligase.